Reading from the N-terminus, the 191-residue chain is GDP-mannose pyrophosphatase (191 aa).

GDP-alpha-D-mannose-binding positions include Tyr-17, Lys-38–Glu-40, Arg-67, and Ala-85–Leu-87. The region spanning Asp-43 to Leu-180 is the Nudix hydrolase domain. Residues Ala-85, Glu-100, and Glu-104 each coordinate Mg(2+). A Nudix box motif is present at residues Gly-86 to Gly-106. GDP-alpha-D-mannose-binding positions include Glu-104, Glu-127, Asp-150–Glu-151, and Lys-176. Residue Glu-151 participates in Mg(2+) binding.

The protein belongs to the Nudix hydrolase family. NudK subfamily. Homodimer. Requires Mg(2+) as cofactor.

The catalysed reaction is GDP-alpha-D-mannose + H2O = alpha-D-mannose 1-phosphate + GMP + 2 H(+). Its function is as follows. Nucleoside diphosphate sugar hydrolase that hydrolyzes GDP-mannose as its preferred substrate, yielding GMP and mannose-1-phosphate. The sequence is that of GDP-mannose pyrophosphatase (nudK) from Shigella dysenteriae serotype 1 (strain Sd197).